We begin with the raw amino-acid sequence, 372 residues long: MSNQHILLMSNLLPVGSNISTWWNFGSMLLTCLILQIMTGFFLAIHYTANINLAFSSVIHITRDVPYGWIMQNLHAIGASLFFICIYIHIARGLYYGLYLNKEVWLSGTTLLIILMATAFFGYVLPWGQMSFWAATVITNLLTAIPYLGTTLTTWLWGGFSINDPTLTRFFALHFILPFTIISLSSIHIILLHNEGSNNPLGTNSDIDKIPFHPYHTYKDMLMIIIMTAILFLILSFSPNLLNDPENFSKANPLVTPQHIKPEWYFLFAYGILRSIPNKLGGTLALVMSVMILTTAPFTHTSHTRSMMFRPLSQIVFWTLIATFITITWTATKPVEPPFISISQTASIFYFSFFIMNPLLGWTENKIMMMND.

The next 4 helical transmembrane spans lie at 25-45 (FGSMLLTCLILQIMTGFFLAI), 69-90 (WIMQNLHAIGASLFFICIYIHI), 105-125 (WLSGTTLLIILMATAFFGYVL), and 170-190 (FFALHFILPFTIISLSSIHII). Heme b-binding residues include H75 and H89. Residues H174 and H188 each contribute to the heme b site. H193 is an a ubiquinone binding site. 4 helical membrane passes run 218–238 (YKDMLMIIIMTAILFLILSFS), 280–300 (LGGTLALVMSVMILTTAPFTH), 312–332 (LSQIVFWTLIATFITITWTAT), and 339–358 (FISISQTASIFYFSFFIMNP).

The protein belongs to the cytochrome b family. In terms of assembly, the cytochrome bc1 complex contains 3 respiratory subunits (MT-CYB, CYC1 and UQCRFS1), 2 core proteins (UQCRC1 and UQCRC2) and probably 6 low-molecular weight proteins. The cofactor is heme b.

Its subcellular location is the mitochondrion inner membrane. Component of the ubiquinol-cytochrome c reductase complex (complex III or cytochrome b-c1 complex) that is part of the mitochondrial respiratory chain. The b-c1 complex mediates electron transfer from ubiquinol to cytochrome c. Contributes to the generation of a proton gradient across the mitochondrial membrane that is then used for ATP synthesis. This chain is Cytochrome b (MT-CYB), found in Walterinnesia aegyptia (Desert black snake).